We begin with the raw amino-acid sequence, 195 residues long: ATP-dependent Clp protease proteolytic subunit (195 aa).

Ser98 serves as the catalytic Nucleophile. His123 is an active-site residue.

It belongs to the peptidase S14 family. Fourteen ClpP subunits assemble into 2 heptameric rings which stack back to back to give a disk-like structure with a central cavity, resembling the structure of eukaryotic proteasomes.

The protein resides in the cytoplasm. It carries out the reaction Hydrolysis of proteins to small peptides in the presence of ATP and magnesium. alpha-casein is the usual test substrate. In the absence of ATP, only oligopeptides shorter than five residues are hydrolyzed (such as succinyl-Leu-Tyr-|-NHMec, and Leu-Tyr-Leu-|-Tyr-Trp, in which cleavage of the -Tyr-|-Leu- and -Tyr-|-Trp bonds also occurs).. Its function is as follows. Cleaves peptides in various proteins in a process that requires ATP hydrolysis. Has a chymotrypsin-like activity. Plays a major role in the degradation of misfolded proteins. The sequence is that of ATP-dependent Clp protease proteolytic subunit from Thermoanaerobacter pseudethanolicus (strain ATCC 33223 / 39E) (Clostridium thermohydrosulfuricum).